Consider the following 211-residue polypeptide: Inactive ribonuclease-like protein 10 (211 aa).

An N-terminal signal peptide occupies residues Met-1 to Gly-24.

Belongs to the pancreatic ribonuclease family. In terms of processing, the N-terminus is blocked. Glycosylated.

The protein resides in the secreted. Its function is as follows. Secreted proximal epididymal protein required for post-testicular sperm maturation and male fertility. May be involved in sperm adhesion to the egg zona pellucida. Does not have ribonuclease activity. This chain is Inactive ribonuclease-like protein 10 (RNASE10), found in Bos taurus (Bovine).